Here is a 205-residue protein sequence, read N- to C-terminus: Molybdenum cofactor guanylyltransferase (205 aa).

GTP contacts are provided by residues 14-16 (LAG), Lys27, Asp77, and Asp107. Asp107 lines the Mg(2+) pocket.

It belongs to the MobA family. Monomer. It depends on Mg(2+) as a cofactor.

It is found in the cytoplasm. It catalyses the reaction Mo-molybdopterin + GTP + H(+) = Mo-molybdopterin guanine dinucleotide + diphosphate. Functionally, transfers a GMP moiety from GTP to Mo-molybdopterin (Mo-MPT) cofactor (Moco or molybdenum cofactor) to form Mo-molybdopterin guanine dinucleotide (Mo-MGD) cofactor. This is Molybdenum cofactor guanylyltransferase from Burkholderia lata (strain ATCC 17760 / DSM 23089 / LMG 22485 / NCIMB 9086 / R18194 / 383).